Consider the following 42-residue polypeptide: Cytochrome b6-f complex subunit 7 (42 aa).

The chain crosses the membrane as a helical span at residues 15-35 (IVTAAVTCIFMVLFGLSLGFA).

This sequence belongs to the PetM family. In terms of assembly, the 4 large subunits of the cytochrome b6-f complex are cytochrome b6, subunit IV (17 kDa polypeptide, PetD), cytochrome f and the Rieske protein, while the 4 small subunits are PetG, PetL, PetM and PetN. The complex functions as a dimer.

It localises to the plastid. The protein resides in the chloroplast thylakoid membrane. In terms of biological role, component of the cytochrome b6-f complex, which mediates electron transfer between photosystem II (PSII) and photosystem I (PSI), cyclic electron flow around PSI, and state transitions. In Trieres chinensis (Marine centric diatom), this protein is Cytochrome b6-f complex subunit 7.